The chain runs to 427 residues: G2/mitotic-specific cyclin-3 (427 aa).

Residues 1–12 (MHHNSQSLSSGH) are compositionally biased toward polar residues. Disordered stretches follow at residues 1–29 (MHHN…NLKH) and 89–126 (SVAQ…EDQE). The span at 89–105 (SVAQRKEADHNDLLTDR) shows a compositional bias: basic and acidic residues. The segment covering 106 to 126 (EQEEPVEDDGESEEDEEEDQE) has biased composition (acidic residues).

Belongs to the cyclin family. Cyclin AB subfamily.

In terms of biological role, essential for the control of the cell cycle at the G2/M (mitosis) transition. Interacts with the CDC2 protein kinase to form MPF. G2/M cyclins accumulate steadily during G2 and are abruptly destroyed at mitosis. The protein is G2/mitotic-specific cyclin-3 (CLB3) of Saccharomyces cerevisiae (strain ATCC 204508 / S288c) (Baker's yeast).